The sequence spans 80 residues: Protein CEBPZOS (80 aa).

Residues 15–32 form a helical membrane-spanning segment; that stretch reads GVLVAELVGVFGAYFLFS.

It localises to the mitochondrion membrane. In Homo sapiens (Human), this protein is Protein CEBPZOS.